We begin with the raw amino-acid sequence, 483 residues long: MFS-type transporter hepF (483 aa).

The tract at residues 1-31 (METPAGKADRPRDHDSEQSQDNVVSWEGEDD) is disordered. Residues 7 to 17 (KADRPRDHDSE) show a composition bias toward basic and acidic residues. 11 helical membrane passes run 89–109 (TIVVSIFVLGLAFGPLLAAPI), 124–144 (ILYTIFTVACGVSTNISMLIV), 147–167 (FFAGVTGSAPLTIGGGTVADL), 179–199 (FVTLGQAVAPAIGPVAGGFLT), 206–226 (WVFWLLTIVNGTITICQILFT), 276–296 (PISLIVALCCAVIYGILYVLV), 311–331 (IGISGLGYLGLGIGNLVGLWI), 357–377 (PMMILSGPVIAAGLFWYGWSV), 385–405 (MPIVGSGIVGLGNMFFFMPMV), 416–436 (AASAIAANAVLRSIGGAVLPL), and 448–468 (GWGNSILAFMALVFNPLLIAI).

The protein belongs to the major facilitator superfamily.

Its subcellular location is the cell membrane. In terms of biological role, MFS-type transporter; part of the gene cluster that mediates the biosynthesis of heptelidic acid (HA), a sesquiterpene lactone that acts as an inhibitor of glyceraldehyde-3-phosphatedehydrogenase (GAPDH) and a growth inhibitor of the salt-tolerant lactic acid bacteria in soy sauce brewing. Might be required for efficient secretion of heptelidic acid. The sequence is that of MFS-type transporter hepF (hepF) from Aspergillus oryzae (strain ATCC 42149 / RIB 40) (Yellow koji mold).